We begin with the raw amino-acid sequence, 631 residues long: Probable methyltransferase PMT16 (631 aa).

The Cytoplasmic portion of the chain corresponds to 1-14 (MNLFTRISSRTKKA). Residues 15 to 35 (NLYYVTLVALLCIASYLLGIW) form a helical; Signal-anchor for type II membrane protein membrane-spanning segment. The Lumenal segment spans residues 36 to 631 (QNTAVNPRAA…EDKNNTSALS (596 aa)). N-linked (GlcNAc...) asparagine glycosylation is found at N61, N230, and N626.

This sequence belongs to the methyltransferase superfamily.

The protein resides in the endoplasmic reticulum membrane. The sequence is that of Probable methyltransferase PMT16 from Arabidopsis thaliana (Mouse-ear cress).